The chain runs to 775 residues: Ubiquitin carboxyl-terminal hydrolase 14 (775 aa).

The UBP-type 1; degenerate zinc-finger motif lies at 1–108; sequence MSCPHLTETN…EDLYDYFYVP (108 aa). Positions 25, 28, 41, 44, 49, 56, 60, 66, 153, 155, 174, 177, 186, 189, 194, 207, 211, 217, 236, and 239 each coordinate Zn(2+). Residues 151-259 form a UBP-type 2 zinc finger; the sequence is TTCDHIINLP…THMLNFGIDI (109 aa). Positions 300-774 constitute a USP domain; that stretch reads TGLKNLGNSC…TGYVYLFERL (475 aa). The active-site Nucleophile is the cysteine 309. Serine 456 bears the Phosphoserine mark. UBA domains follow at residues 576–617 and 639–679; these read EWNQ…LFEH and SVSE…ILNH. Histidine 730 serves as the catalytic Proton acceptor.

The protein belongs to the peptidase C19 family.

It catalyses the reaction Thiol-dependent hydrolysis of ester, thioester, amide, peptide and isopeptide bonds formed by the C-terminal Gly of ubiquitin (a 76-residue protein attached to proteins as an intracellular targeting signal).. The protein is Ubiquitin carboxyl-terminal hydrolase 14 (ubp14) of Schizosaccharomyces pombe (strain 972 / ATCC 24843) (Fission yeast).